We begin with the raw amino-acid sequence, 169 residues long: MSRIALYPGSFDPVTNGHLDVVRHAVALCDKLVVAIGIHPGKKPLFTTEERLAMVERVFGPVAKAAGCDFGCTTYDNLTVTAAEKVGATLMIRGLRDGSDLDYEMQIAGMNETMAPAIHTVFLPASVGVRPITATLVRQIAAMGGDVSAFVPAEVASALKSKFAAGSPA.

Ser10 lines the substrate pocket. Residues 10–11 and His18 each bind ATP; that span reads SF. Substrate-binding residues include Lys42, Thr79, and Arg93. ATP-binding positions include 94 to 96, Glu104, and 129 to 135; these read GLR and VRPITAT.

It belongs to the bacterial CoaD family. Homohexamer. Requires Mg(2+) as cofactor.

Its subcellular location is the cytoplasm. It catalyses the reaction (R)-4'-phosphopantetheine + ATP + H(+) = 3'-dephospho-CoA + diphosphate. It functions in the pathway cofactor biosynthesis; coenzyme A biosynthesis; CoA from (R)-pantothenate: step 4/5. In terms of biological role, reversibly transfers an adenylyl group from ATP to 4'-phosphopantetheine, yielding dephospho-CoA (dPCoA) and pyrophosphate. The protein is Phosphopantetheine adenylyltransferase of Rhodopseudomonas palustris (strain ATCC BAA-98 / CGA009).